A 342-amino-acid polypeptide reads, in one-letter code: uncharacterized protein (342 aa).

Positions 155 to 309 constitute a Nudix hydrolase domain; the sequence is TYGIHINGYV…KPNCALVMVD (155 aa).

This is an uncharacterized protein from Saccharomyces cerevisiae (strain ATCC 204508 / S288c) (Baker's yeast).